The sequence spans 1141 residues: IgM protease (1141 aa).

Positions M1 to A32 are cleaved as a signal peptide. The active-site Nucleophile is C195. Disordered stretches follow at residues P518 to L544, E725 to T749, L781 to E805, and E839 to S860. The span at S526–L544 shows a compositional bias: polar residues. Low complexity-rich tracts occupy residues E738 to T749 and E795 to E805. A helical membrane pass occupies residues I1119–L1136.

Belongs to the peptidase C66 family.

It is found in the cell membrane. The protein localises to the secreted. IgM cleavage is inhibited by iodoacetamide but not by AEBSF, bestatin, E-64, Z-LVG-CHN(2), or EDTA. Its function is as follows. Catalyzes the specific cleavage of porcine IgM bound to the bacterial surface. Can degrade only IgM but neither IgG nor IgA, and is host specific, as it exclusively cleaves porcine IgM but not IgM from six other species, including human, mouse and a closely related member of the Suidae family. Promotes survival in porcine blood. Is thus involved in a so-far-unknown mechanism of host-pathogen interaction at an early stage of the host immune response. The protein is IgM protease (ide) of Streptococcus suis (strain P1/7).